Reading from the N-terminus, the 180-residue chain is ATP synthase subunit delta (180 aa).

It belongs to the ATPase delta chain family. As to quaternary structure, F-type ATPases have 2 components, F(1) - the catalytic core - and F(0) - the membrane proton channel. F(1) has five subunits: alpha(3), beta(3), gamma(1), delta(1), epsilon(1). F(0) has three main subunits: a(1), b(2) and c(10-14). The alpha and beta chains form an alternating ring which encloses part of the gamma chain. F(1) is attached to F(0) by a central stalk formed by the gamma and epsilon chains, while a peripheral stalk is formed by the delta and b chains.

The protein localises to the cell inner membrane. In terms of biological role, f(1)F(0) ATP synthase produces ATP from ADP in the presence of a proton or sodium gradient. F-type ATPases consist of two structural domains, F(1) containing the extramembraneous catalytic core and F(0) containing the membrane proton channel, linked together by a central stalk and a peripheral stalk. During catalysis, ATP synthesis in the catalytic domain of F(1) is coupled via a rotary mechanism of the central stalk subunits to proton translocation. This protein is part of the stalk that links CF(0) to CF(1). It either transmits conformational changes from CF(0) to CF(1) or is implicated in proton conduction. This is ATP synthase subunit delta from Pelobacter propionicus (strain DSM 2379 / NBRC 103807 / OttBd1).